A 150-amino-acid polypeptide reads, in one-letter code: Avidin-related protein 1 (150 aa).

An N-terminal signal peptide occupies residues 1-24; that stretch reads MVHATSPLLLLLLLSLALVAPGLS. The Avidin-like domain maps to 26-147; that stretch reads RKCSLTGKWD…GNNDFTRQRT (122 aa). The cysteines at positions 28 and 105 are disulfide-linked. Asparagine 36 and serine 40 together coordinate biotin. A glycan (N-linked (GlcNAc...) asparagine) is linked at asparagine 54. Positions 57, 59, and 63 each coordinate biotin. N-linked (GlcNAc...) asparagine glycosylation is found at asparagine 67 and asparagine 93. Biotin is bound by residues serine 95, serine 99, and asparagine 140.

It belongs to the avidin/streptavidin family. Homotetramer. Glycosylated.

It is found in the secreted. Forms a strong non-covalent specific complex with biotin. This is Avidin-related protein 1 (AVR1) from Gallus gallus (Chicken).